We begin with the raw amino-acid sequence, 184 residues long: MSCRSEHIWIEPITGSRKTSNFCWAVILFLGSLGFLLVGTSSYLGRNLISLFPSQQILFFPQGIVMSFYGIAGLFISSYLWCTLSLNVGGGYDRFDRKEGMVCIFRWGFPGKNRRIFLRFLIKDIQSVRIEAKEGIYARRVLYMDIRGQGAIPLTRTDENVTPREIEQKAAELAYFLRVPIEVF.

The next 2 helical transmembrane spans lie at 22–42 (FCWA…GTSS) and 57–77 (ILFF…LFIS).

The protein belongs to the Ycf4 family.

It localises to the plastid. Its subcellular location is the chloroplast thylakoid membrane. Its function is as follows. Seems to be required for the assembly of the photosystem I complex. In Panax ginseng (Korean ginseng), this protein is Photosystem I assembly protein Ycf4.